We begin with the raw amino-acid sequence, 597 residues long: Formate--tetrahydrofolate ligase (597 aa).

84-91 (TPLGEGKS) is an ATP binding site.

It belongs to the formate--tetrahydrofolate ligase family.

It catalyses the reaction (6S)-5,6,7,8-tetrahydrofolate + formate + ATP = (6R)-10-formyltetrahydrofolate + ADP + phosphate. Its pathway is one-carbon metabolism; tetrahydrofolate interconversion. The sequence is that of Formate--tetrahydrofolate ligase from Dehalococcoides mccartyi (strain CBDB1).